Consider the following 130-residue polypeptide: Small ribosomal subunit protein uS11 (130 aa).

It belongs to the universal ribosomal protein uS11 family. As to quaternary structure, part of the 30S ribosomal subunit. Interacts with proteins S7 and S18. Binds to IF-3.

Functionally, located on the platform of the 30S subunit, it bridges several disparate RNA helices of the 16S rRNA. Forms part of the Shine-Dalgarno cleft in the 70S ribosome. The sequence is that of Small ribosomal subunit protein uS11 from Prochlorococcus marinus (strain AS9601).